Here is a 397-residue protein sequence, read N- to C-terminus: Elongation factor Tu (397 aa).

The tr-type G domain occupies 10-207 (KPHVNIGTIG…ACDSYIEEPE (198 aa)). The segment at 19–26 (GHIDHGKT) is G1. A GTP-binding site is contributed by 19–26 (GHIDHGKT). T26 contributes to the Mg(2+) binding site. The interval 60 to 64 (GITIA) is G2. Positions 81 to 84 (DCPG) are G3. Residues 81-85 (DCPGH) and 136-139 (NKCD) each bind GTP. The tract at residues 136 to 139 (NKCD) is G4. The segment at 174–176 (SAL) is G5.

This sequence belongs to the TRAFAC class translation factor GTPase superfamily. Classic translation factor GTPase family. EF-Tu/EF-1A subfamily. As to quaternary structure, monomer.

It localises to the cytoplasm. It carries out the reaction GTP + H2O = GDP + phosphate + H(+). Functionally, GTP hydrolase that promotes the GTP-dependent binding of aminoacyl-tRNA to the A-site of ribosomes during protein biosynthesis. The sequence is that of Elongation factor Tu from Maridesulfovibrio salexigens (strain ATCC 14822 / DSM 2638 / NCIMB 8403 / VKM B-1763) (Desulfovibrio salexigens).